We begin with the raw amino-acid sequence, 69 residues long: Conotoxin Eb6.9 (69 aa).

The N-terminal stretch at 1 to 17 is a signal peptide; it reads VLIIAVLFLTACQLTTA. The propeptide occupies 18–41; the sequence is ETYSRGRQKHRARRSTDKNSKWTR. 3 disulfide bridges follow: C43–C57, C50–C61, and C56–C68.

Belongs to the conotoxin O1 superfamily. In terms of tissue distribution, expressed by the venom duct.

The protein localises to the secreted. The polypeptide is Conotoxin Eb6.9 (E1) (Conus ebraeus (Hebrew cone)).